A 159-amino-acid polypeptide reads, in one-letter code: NAD(P)H-quinone oxidoreductase subunit J, chloroplastic (159 aa).

It belongs to the complex I 30 kDa subunit family. As to quaternary structure, NDH is composed of at least 16 different subunits, 5 of which are encoded in the nucleus.

It is found in the plastid. It localises to the chloroplast thylakoid membrane. It catalyses the reaction a plastoquinone + NADH + (n+1) H(+)(in) = a plastoquinol + NAD(+) + n H(+)(out). The enzyme catalyses a plastoquinone + NADPH + (n+1) H(+)(in) = a plastoquinol + NADP(+) + n H(+)(out). Functionally, NDH shuttles electrons from NAD(P)H:plastoquinone, via FMN and iron-sulfur (Fe-S) centers, to quinones in the photosynthetic chain and possibly in a chloroplast respiratory chain. The immediate electron acceptor for the enzyme in this species is believed to be plastoquinone. Couples the redox reaction to proton translocation, and thus conserves the redox energy in a proton gradient. In Agrostis stolonifera (Creeping bentgrass), this protein is NAD(P)H-quinone oxidoreductase subunit J, chloroplastic.